A 2303-amino-acid chain; its full sequence is Adenomatous polyposis coli protein 2 (2303 aa).

Residues 8–59 (YEQLVRQVEALKAENSHLRQELRDNSSHLSKLETETSGMKEVLKHLQGKLEQ) are a coiled coil. 2 disordered regions span residues 94-120 (PTLGPEPAARTPEGSPVHGSGPSKDSF) and 247-270 (VPVDEDPETEVPTHPEDGTPQPGN). ARM repeat units follow at residues 302-341 (PESCVAMRRSGCLPLLLQILHGTEAAAGGRAGAPGAPGAK), 479-518 (ANKATLCARRGCMEAIVAQLASDSEELHQVVSSILRNLSW), 522-562 (INSK…NLSA), 566-609 (ENKA…NVSS), 615-654 (EDYRQVLRDHNCLQTLLQHLTSHSLTIVSNACGTLWNLSA), and 657-696 (ARDQELLWDLGAVGMLRNLVHSKHKMIAMGSAAALRNLLA). 2 disordered regions span residues 744 to 764 (KQGPPAAEAATKKPLPPLRHL) and 816 to 835 (LARTPPTRRGGKEAEKDTSG). The segment covering 825–834 (GGKEAEKDTS) has biased composition (basic and acidic residues). Residues 840 to 864 (AAKAKAKLALAVARIDQLVEDISAL) adopt a coiled-coil conformation. 4 disordered regions span residues 867 to 908 (SSDD…AGSR), 953 to 986 (RREDPRCGQPRPSRLDLDLPGCQAEPPAREATSA), 1069 to 1152 (RCSS…ENYV), and 1173 to 1228 (SPSI…EATQ). The segment covering 869 to 878 (DDSFSLSSGD) has biased composition (low complexity). The stretch at 1058-1077 (LAAQEGPLSLSRCSSLSSLS) is repeat 1. Positions 1058–1587 (LAAQEGPLSL…SLSSSASSLS (530 aa)) are 5 X 20 AA approximate repeat of F-X-V-E-X-T-P-X-C-F-S-R-X-S-S-L-S-S-L-S. The interval 1058 to 1587 (LAAQEGPLSL…SLSSSASSLS (530 aa)) is interaction with CTNNB1. The segment covering 1069–1084 (RCSSLSSLSSAGRPGP) has biased composition (low complexity). Positions 1088–1101 (GDLDDSDSSLEGLE) are enriched in acidic residues. The segment covering 1143 to 1152 (TPSSSSENYV) has biased composition (polar residues). Repeat 2 spans residues 1150 to 1169 (NYVQETPLVLSRCSSVSSLG). A compositionally biased stretch (low complexity) spans 1173-1186 (SPSIASSIPSEPCS). A compositionally biased stretch (polar residues) spans 1202–1212 (PGQTMPPSRSK). Repeat unit 3 spans residues 1263–1282 (FTVEKPDENFSCASSLSALA). Disordered stretches follow at residues 1307-1335 (GAGGAGLHFAGHRRREEGPAPTGSRPRGA), 1382-1497 (PAQE…QSLC), 1510-1684 (YGND…LDSV), 1724-2031 (LSVG…RGRP), and 2046-2232 (LRAA…DVDG). The segment covering 1390–1410 (TDSAEGTPVNFSSAASLSDET) has biased composition (polar residues). Repeat unit 4 spans residues 1391-1410 (DSAEGTPVNFSSAASLSDET). Composition is skewed to basic and acidic residues over residues 1477 to 1489 (ADKDGSKPGRTRG) and 1537 to 1548 (FTRERPQGRKEA). Repeat 5 spans residues 1568–1587 (LIADETPPCYSLSSSASSLS). Residues 1578–1589 (SLSSSASSLSEP) show a composition bias toward low complexity. S1585 and S1587 each carry phosphoserine. The span at 1638–1654 (PRRRPPVSGLRRRKPRA) shows a compositional bias: basic residues. 2 stretches are compositionally biased toward basic and acidic residues: residues 1655–1671 (TRLDERPAEGSRERGEE) and 1739–1755 (RQAEGEMGSARRPEKRG). The span at 1819–1830 (APPCLAQPAAPA) shows a compositional bias: low complexity. Residues 1821–1900 (PCLAQPAAPA…PPVTQAAGAL (80 aa)) form a required for localization to microtubules and function in microtubule stabilization region. The segment covering 1851–1860 (ELATLSQPPR) has biased composition (polar residues). Composition is skewed to low complexity over residues 1868-1886 (LAKTPSSSSSQTSPASQPL), 1971-1984 (GLVRVASALSSGSE), 2011-2026 (LSSAESAASAPQGASP), 2049-2062 (APRQGPAPARQRPP), and 2113-2123 (GAVPAAPASAD). Positions 2067-2144 (SPGERPARRT…PLPRVAAPGT (78 aa)) are interaction with MAPRE1 and MAPRE3. Positions 2124 to 2135 (AARRSSDGEPRP) are enriched in basic and acidic residues. Residues 2200–2209 (KTNSSTSPSL) are compositionally biased toward polar residues.

Belongs to the adenomatous polyposis coli (APC) family. Interacts with PSRC1. Interacts with APC. Interacts with CTNNB1. Interacts with MAPRE1 and MAPRE3. Interacts with TP53BP. Interacts possibly with AXIN2. In terms of tissue distribution, widely expressed (at protein level). Specifically expressed in the CNS.

Its subcellular location is the cytoplasm. The protein localises to the cytoskeleton. The protein resides in the golgi apparatus. It is found in the perinuclear region. Stabilizes microtubules and may regulate actin fiber dynamics through the activation of Rho family GTPases. May also function in Wnt signaling by promoting the rapid degradation of CTNNB1. In Homo sapiens (Human), this protein is Adenomatous polyposis coli protein 2.